The following is a 116-amino-acid chain: Ribosome-binding factor A (116 aa).

Belongs to the RbfA family. As to quaternary structure, monomer. Binds 30S ribosomal subunits, but not 50S ribosomal subunits or 70S ribosomes.

The protein localises to the cytoplasm. One of several proteins that assist in the late maturation steps of the functional core of the 30S ribosomal subunit. Associates with free 30S ribosomal subunits (but not with 30S subunits that are part of 70S ribosomes or polysomes). Required for efficient processing of 16S rRNA. May interact with the 5'-terminal helix region of 16S rRNA. This Chlorobium phaeobacteroides (strain BS1) protein is Ribosome-binding factor A.